The chain runs to 426 residues: 4-hydroxy-3-methylbut-2-en-1-yl diphosphate synthase (flavodoxin) (426 aa).

The segment at 1–20 (MLDRDLTLSDDAYESSPVSR) is disordered. 4 residues coordinate [4Fe-4S] cluster: cysteine 320, cysteine 323, cysteine 366, and glutamate 373.

It belongs to the IspG family. [4Fe-4S] cluster serves as cofactor.

The enzyme catalyses (2E)-4-hydroxy-3-methylbut-2-enyl diphosphate + oxidized [flavodoxin] + H2O + 2 H(+) = 2-C-methyl-D-erythritol 2,4-cyclic diphosphate + reduced [flavodoxin]. Its pathway is isoprenoid biosynthesis; isopentenyl diphosphate biosynthesis via DXP pathway; isopentenyl diphosphate from 1-deoxy-D-xylulose 5-phosphate: step 5/6. Converts 2C-methyl-D-erythritol 2,4-cyclodiphosphate (ME-2,4cPP) into 1-hydroxy-2-methyl-2-(E)-butenyl 4-diphosphate. The chain is 4-hydroxy-3-methylbut-2-en-1-yl diphosphate synthase (flavodoxin) from Wolbachia pipientis subsp. Culex pipiens (strain wPip).